A 991-amino-acid polypeptide reads, in one-letter code: Transcription factor ROB1 (991 aa).

The segment at residues 17–43 (CTVCRTIKRKCDGNTPCSNCLKRNQEC) is a DNA-binding region (zn(2)-C6 fungal-type). Disordered regions lie at residues 150–188 (LNQQ…ISLA), 792–875 (FYAQ…EDNP), and 901–959 (QEEG…PQLP). The segment covering 152–168 (QQQQQQQPSPQSLSQSS) has biased composition (low complexity). A compositionally biased stretch (polar residues) spans 169 to 187 (ASEVSTRSSPASPNSTISL). Residues 795-806 (QQQQQQQQQQQQ) are compositionally biased toward low complexity. Composition is skewed to basic and acidic residues over residues 807 to 817 (PKHEYHDHQQE) and 825 to 855 (QEEH…YPMK). The segment covering 907-931 (QQQQQQQQEQVQQEQVQQEQVQQDQ) has biased composition (low complexity).

Its subcellular location is the nucleus. Its function is as follows. Transcription factor that mediates conventional biofilm formation and plays a key role in microcolony formation under both flow and static conditions and to epithelial surfaces. Modulates infection of mammalian hosts. In Candida albicans (strain SC5314 / ATCC MYA-2876) (Yeast), this protein is Transcription factor ROB1.